The primary structure comprises 416 residues: Probable glucan 1,3-beta-glucosidase A (416 aa).

Residues 1–22 (MIFKFSQKALVALYLVVGLAEA) form the signal peptide. E211 (proton donor) is an active-site residue. 2 disulfide bridges follow: C291–C415 and C316–C342. E308 acts as the Nucleophile in catalysis. Residue N344 is glycosylated (N-linked (GlcNAc...) asparagine).

It belongs to the glycosyl hydrolase 5 (cellulase A) family. In terms of assembly, monomer. It depends on Mn(2+) as a cofactor.

The protein resides in the secreted. It carries out the reaction Successive hydrolysis of beta-D-glucose units from the non-reducing ends of (1-&gt;3)-beta-D-glucans, releasing alpha-glucose.. Its function is as follows. Beta-glucanases participate in the metabolism of beta-glucan, the main structural component of the cell wall. It could also function biosynthetically as a transglycosylase. This is Probable glucan 1,3-beta-glucosidase A (exgA) from Aspergillus fumigatus (strain ATCC MYA-4609 / CBS 101355 / FGSC A1100 / Af293) (Neosartorya fumigata).